Consider the following 828-residue polypeptide: Leucine--tRNA ligase (828 aa).

The short motif at 36–46 (PYPSGKIHIGH) is the 'HIGH' region element. Positions 595 to 599 (KMSKS) match the 'KMSKS' region motif. ATP is bound at residue Lys-598.

Belongs to the class-I aminoacyl-tRNA synthetase family.

It is found in the cytoplasm. The catalysed reaction is tRNA(Leu) + L-leucine + ATP = L-leucyl-tRNA(Leu) + AMP + diphosphate. This Rickettsia prowazekii (strain Madrid E) protein is Leucine--tRNA ligase.